We begin with the raw amino-acid sequence, 831 residues long: Probable DNA-directed RNA polymerase (831 aa).

Active-site residues include D490, K560, and D738.

The protein belongs to the phage and mitochondrial RNA polymerase family.

The protein localises to the mitochondrion. It catalyses the reaction RNA(n) + a ribonucleoside 5'-triphosphate = RNA(n+1) + diphosphate. In terms of biological role, DNA-dependent RNA polymerase catalyzes the transcription of DNA into RNA using the four ribonucleoside triphosphates as substrates. In Gelasinospora sp. (strain G114), this protein is Probable DNA-directed RNA polymerase.